A 346-amino-acid polypeptide reads, in one-letter code: MNNFRWFWFFIKSRINWILWILFLNIILLGVAYIDYEISVESVFYIVILNVGLSILFLLFTFVKEVRLSKHFYEDKEIEEIKHKDLAETPFQQQVIDYLYRHIAAQKEKVVEQQLQIKNHEQTITEFVHDIKTPVTAMKLLIDQENDDQRKRALLFEWSRINEMLDKQLYLTRLETHHRDMYFDYISLKRMVIDEIQVTRHISQAKGIGFELDFKDEQKVYTDVKWCRMMIRQVLSNSLKYSDNSTINLSGYNIEGHVVLKIKDYGRGISKRDLPRIFDRGFTSTTDRNDTASSGMGLYLVQSVKEQLGIEVKVDSIVGKGTTFYFIFPQQNEIIERMSKVTRLSF.

The next 2 membrane-spanning stretches (helical) occupy residues 15–35 (INWI…AYID) and 43–63 (VFYI…FTFV). Residues 126 to 332 (EFVHDIKTPV…TFYFIFPQQN (207 aa)) form the Histidine kinase domain. Histidine 129 carries the phosphohistidine; by autocatalysis modification.

In terms of processing, autophosphorylated.

Its subcellular location is the cell membrane. It catalyses the reaction ATP + protein L-histidine = ADP + protein N-phospho-L-histidine.. Its function is as follows. Member of the two-component regulatory system GraR/GraS involved in resistance against cationic antimicrobial peptides (CAMPs). GraS probably functions as a sensor protein kinase which is autophosphorylated at a histidine residue and transfers its phosphate group to GraR. The protein is Sensor histidine kinase GraS (graS) of Staphylococcus epidermidis (strain ATCC 35984 / DSM 28319 / BCRC 17069 / CCUG 31568 / BM 3577 / RP62A).